We begin with the raw amino-acid sequence, 75 residues long: Large ribosomal subunit protein bL31 (75 aa).

Residues Cys-16, Cys-18, Cys-36, and Cys-39 each coordinate Zn(2+).

It belongs to the bacterial ribosomal protein bL31 family. Type A subfamily. Part of the 50S ribosomal subunit. Requires Zn(2+) as cofactor.

In terms of biological role, binds the 23S rRNA. The sequence is that of Large ribosomal subunit protein bL31 from Desulforapulum autotrophicum (strain ATCC 43914 / DSM 3382 / VKM B-1955 / HRM2) (Desulfobacterium autotrophicum).